An 806-amino-acid polypeptide reads, in one-letter code: Disintegrin and metalloproteinase domain-containing protein 1b (806 aa).

An N-terminal signal peptide occupies residues 1-33 (MERLKLGKIPEHWCIRLVAMLLLAIIFLPSTFC). Positions 169–188 (CSVTPKDSPGDTSHPPRSRK) are disordered. The Peptidase M12B domain occupies 203–397 (KYVEMFVVVN…HRGVCLLDEP (195 aa)). Residue N224 is glycosylated (N-linked (GlcNAc...) asparagine). 7 cysteine pairs are disulfide-bonded: C313/C392, C353/C376, C355/C361, C462/C482, C635/C647, C641/C653, and C655/C664. Position 338 (H338) interacts with Zn(2+). E339 is a catalytic residue. The Zn(2+) site is built by H342 and H348. N375 and N476 each carry an N-linked (GlcNAc...) asparagine glycan. One can recognise a Disintegrin domain in the interval 406 to 490 (AANCGNGVVE…ACPSDRKAQD (85 aa)). In terms of domain architecture, EGF-like spans 631-665 (FSFPCSPSKQCNKHGVCNDLGNCHCSFGFAPPDCK). The segment at 668–694 (GTGGSVDSGPAVNLSNDSSPGPNSTQS) is disordered. Residues N680, N683, and N690 are each glycosylated (N-linked (GlcNAc...) asparagine). Residues 680–694 (NLSNDSSPGPNSTQS) are compositionally biased toward polar residues. The helical transmembrane segment at 705-725 (LIVLAVILVLMILLIIICIIS) threads the bilayer. Residues 726–806 (AYTKSETASE…KDEDEEEGEE (81 aa)) are Cytoplasmic-facing. The interval 735-806 (EAGPSELEEL…KDEDEEEGEE (72 aa)) is disordered. A compositionally biased stretch (acidic residues) spans 740–806 (ELEELPEGEK…KDEDEEEGEE (67 aa)).

In terms of assembly, heterodimer with ADAM2/fertilin subunit beta. In terms of tissue distribution, testis.

The protein localises to the membrane. May play a role in spermatogenesis and sperm maturation. In Mus musculus (Mouse), this protein is Disintegrin and metalloproteinase domain-containing protein 1b (Adam1b).